Consider the following 87-residue polypeptide: NADH dehydrogenase [ubiquinone] 1 alpha subcomplex subunit 4-like 2 (87 aa).

The protein belongs to the complex I NDUFA4 subunit family.

The protein is NADH dehydrogenase [ubiquinone] 1 alpha subcomplex subunit 4-like 2 (NDUFA4L2) of Bos taurus (Bovine).